The chain runs to 82 residues: Sec-independent protein translocase protein TatA (82 aa).

A helical transmembrane segment spans residues 1–21 (MGLSTTHLIIFLVIIVLIFGT).

It belongs to the TatA/E family. As to quaternary structure, the Tat system comprises two distinct complexes: a TatABC complex, containing multiple copies of TatA, TatB and TatC subunits, and a separate TatA complex, containing only TatA subunits. Substrates initially bind to the TatABC complex, which probably triggers association of the separate TatA complex to form the active translocon.

It is found in the cell inner membrane. Part of the twin-arginine translocation (Tat) system that transports large folded proteins containing a characteristic twin-arginine motif in their signal peptide across membranes. TatA could form the protein-conducting channel of the Tat system. The protein is Sec-independent protein translocase protein TatA of Leptothrix cholodnii (strain ATCC 51168 / LMG 8142 / SP-6) (Leptothrix discophora (strain SP-6)).